An 88-amino-acid polypeptide reads, in one-letter code: Elongation factor 1-beta (88 aa).

The protein belongs to the EF-1-beta/EF-1-delta family.

Promotes the exchange of GDP for GTP in EF-1-alpha/GDP, thus allowing the regeneration of EF-1-alpha/GTP that could then be used to form the ternary complex EF-1-alpha/GTP/AAtRNA. This chain is Elongation factor 1-beta (ef1b), found in Thermoplasma acidophilum (strain ATCC 25905 / DSM 1728 / JCM 9062 / NBRC 15155 / AMRC-C165).